The sequence spans 348 residues: Holliday junction branch migration complex subunit RuvB (348 aa).

Residues 4–186 are large ATPase domain (RuvB-L); sequence TDRIISANTA…FGIIQRLEFY (183 aa). ATP is bound by residues isoleucine 25, arginine 26, glycine 67, lysine 70, threonine 71, threonine 72, 133 to 135, arginine 176, tyrosine 186, and arginine 223; that span reads EDY. Mg(2+) is bound at residue threonine 71. The segment at 187–257 is small ATPAse domain (RuvB-S); the sequence is SIDDLSKIVY…IADKALSMLK (71 aa). A head domain (RuvB-H) region spans residues 260–348; the sequence is PVGFDHMDHR…SADQQQTLSI (89 aa). Arginine 315 and arginine 320 together coordinate DNA.

This sequence belongs to the RuvB family. Homohexamer. Forms an RuvA(8)-RuvB(12)-Holliday junction (HJ) complex. HJ DNA is sandwiched between 2 RuvA tetramers; dsDNA enters through RuvA and exits via RuvB. An RuvB hexamer assembles on each DNA strand where it exits the tetramer. Each RuvB hexamer is contacted by two RuvA subunits (via domain III) on 2 adjacent RuvB subunits; this complex drives branch migration. In the full resolvosome a probable DNA-RuvA(4)-RuvB(12)-RuvC(2) complex forms which resolves the HJ.

The protein localises to the cytoplasm. The enzyme catalyses ATP + H2O = ADP + phosphate + H(+). The RuvA-RuvB-RuvC complex processes Holliday junction (HJ) DNA during genetic recombination and DNA repair, while the RuvA-RuvB complex plays an important role in the rescue of blocked DNA replication forks via replication fork reversal (RFR). RuvA specifically binds to HJ cruciform DNA, conferring on it an open structure. The RuvB hexamer acts as an ATP-dependent pump, pulling dsDNA into and through the RuvAB complex. RuvB forms 2 homohexamers on either side of HJ DNA bound by 1 or 2 RuvA tetramers; 4 subunits per hexamer contact DNA at a time. Coordinated motions by a converter formed by DNA-disengaged RuvB subunits stimulates ATP hydrolysis and nucleotide exchange. Immobilization of the converter enables RuvB to convert the ATP-contained energy into a lever motion, pulling 2 nucleotides of DNA out of the RuvA tetramer per ATP hydrolyzed, thus driving DNA branch migration. The RuvB motors rotate together with the DNA substrate, which together with the progressing nucleotide cycle form the mechanistic basis for DNA recombination by continuous HJ branch migration. Branch migration allows RuvC to scan DNA until it finds its consensus sequence, where it cleaves and resolves cruciform DNA. This is Holliday junction branch migration complex subunit RuvB from Francisella tularensis subsp. tularensis (strain FSC 198).